A 194-amino-acid chain; its full sequence is Holliday junction branch migration complex subunit RuvA (194 aa).

Residues 1 to 64 (MISSLNGILE…EDALSLFGFA (64 aa)) form a domain I region. A domain II region spans residues 65-143 (TTEELSLFET…KNWEAGVLSQ (79 aa)). The segment at 144–149 (VTEANS) is flexible linker. Positions 149-194 (SDILATLTALGYSSSEAAKAISSLGDNGDLPLEERIKLALNYFNNK) are domain III.

It belongs to the RuvA family. In terms of assembly, homotetramer. Forms an RuvA(8)-RuvB(12)-Holliday junction (HJ) complex. HJ DNA is sandwiched between 2 RuvA tetramers; dsDNA enters through RuvA and exits via RuvB. An RuvB hexamer assembles on each DNA strand where it exits the tetramer. Each RuvB hexamer is contacted by two RuvA subunits (via domain III) on 2 adjacent RuvB subunits; this complex drives branch migration. In the full resolvosome a probable DNA-RuvA(4)-RuvB(12)-RuvC(2) complex forms which resolves the HJ.

It is found in the cytoplasm. The RuvA-RuvB-RuvC complex processes Holliday junction (HJ) DNA during genetic recombination and DNA repair, while the RuvA-RuvB complex plays an important role in the rescue of blocked DNA replication forks via replication fork reversal (RFR). RuvA specifically binds to HJ cruciform DNA, conferring on it an open structure. The RuvB hexamer acts as an ATP-dependent pump, pulling dsDNA into and through the RuvAB complex. HJ branch migration allows RuvC to scan DNA until it finds its consensus sequence, where it cleaves and resolves the cruciform DNA. This is Holliday junction branch migration complex subunit RuvA from Dehalococcoides mccartyi (strain CBDB1).